The chain runs to 391 residues: 3-ketoacyl-CoA thiolase (391 aa).

The Acyl-thioester intermediate role is filled by Cys95. Residues His347 and Cys377 each act as proton acceptor in the active site.

It belongs to the thiolase-like superfamily. Thiolase family. As to quaternary structure, heterotetramer of two alpha chains (FadB) and two beta chains (FadA).

Its subcellular location is the cytoplasm. It catalyses the reaction an acyl-CoA + acetyl-CoA = a 3-oxoacyl-CoA + CoA. Its pathway is lipid metabolism; fatty acid beta-oxidation. Catalyzes the final step of fatty acid oxidation in which acetyl-CoA is released and the CoA ester of a fatty acid two carbons shorter is formed. This Pseudomonas fragi protein is 3-ketoacyl-CoA thiolase.